The primary structure comprises 122 residues: Large ribosomal subunit protein uL14 (122 aa).

Belongs to the universal ribosomal protein uL14 family. In terms of assembly, part of the 50S ribosomal subunit. Forms a cluster with proteins L3 and L19. In the 70S ribosome, L14 and L19 interact and together make contacts with the 16S rRNA in bridges B5 and B8.

Functionally, binds to 23S rRNA. Forms part of two intersubunit bridges in the 70S ribosome. The sequence is that of Large ribosomal subunit protein uL14 from Granulibacter bethesdensis (strain ATCC BAA-1260 / CGDNIH1).